Consider the following 226-residue polypeptide: MEKKLCIAIDGPAAAGKSTVAKIVARKKSYIYIDTGAMYRAITYLALEKGVDLNDEAALTALLKESAIDLTVSPEGEQKVYIAGEDVTEAIRTDSVSNQVSIVAKYAGIREEMTKRQQQLAEKGGVVMDGRDIGTHVLPNAEVKIFLLASVEERAKRRFEENVKKGYNVNYETLAEEIRRRDKLDSEREISPLKKADDALEIDTTSLTIDEVAEKILQIVDKKAQK.

11 to 19 (GPAAAGKST) is an ATP binding site.

Belongs to the cytidylate kinase family. Type 1 subfamily.

It localises to the cytoplasm. The catalysed reaction is CMP + ATP = CDP + ADP. It catalyses the reaction dCMP + ATP = dCDP + ADP. This chain is Cytidylate kinase, found in Bacillus licheniformis (strain ATCC 14580 / DSM 13 / JCM 2505 / CCUG 7422 / NBRC 12200 / NCIMB 9375 / NCTC 10341 / NRRL NRS-1264 / Gibson 46).